Consider the following 404-residue polypeptide: Cysteine desulfurase IscS (404 aa).

Residues 75-76 (AT), Asn155, Gln183, and 203-205 (SAH) each bind pyridoxal 5'-phosphate. Lys206 bears the N6-(pyridoxal phosphate)lysine mark. Thr243 is a pyridoxal 5'-phosphate binding site. Cys328 acts as the Cysteine persulfide intermediate in catalysis. Cys328 serves as a coordination point for [2Fe-2S] cluster.

Belongs to the class-V pyridoxal-phosphate-dependent aminotransferase family. NifS/IscS subfamily. As to quaternary structure, homodimer. Forms a heterotetramer with IscU, interacts with other sulfur acceptors. The cofactor is pyridoxal 5'-phosphate.

It is found in the cytoplasm. It carries out the reaction (sulfur carrier)-H + L-cysteine = (sulfur carrier)-SH + L-alanine. The protein operates within cofactor biosynthesis; iron-sulfur cluster biosynthesis. Master enzyme that delivers sulfur to a number of partners involved in Fe-S cluster assembly, tRNA modification or cofactor biosynthesis. Catalyzes the removal of elemental sulfur atoms from cysteine to produce alanine. Functions as a sulfur delivery protein for Fe-S cluster synthesis onto IscU, an Fe-S scaffold assembly protein, as well as other S acceptor proteins. The sequence is that of Cysteine desulfurase IscS from Photorhabdus laumondii subsp. laumondii (strain DSM 15139 / CIP 105565 / TT01) (Photorhabdus luminescens subsp. laumondii).